Here is a 324-residue protein sequence, read N- to C-terminus: Granaticin polyketide synthase bifunctional cyclase/dehydratase (324 aa).

Positions 1–21 (MVQPAATPVSLPSPTVHRSEH) are disordered.

It participates in antibiotic biosynthesis; granaticin biosynthesis. Is needed for correct cyclization of the oligoketide leading to isochromanequinone formation. The chain is Granaticin polyketide synthase bifunctional cyclase/dehydratase (gra-orf4) from Streptomyces violaceoruber.